Consider the following 357-residue polypeptide: Histidine biosynthesis bifunctional protein HisB (357 aa).

Residues 1 to 168 are histidinol-phosphatase; the sequence is MTPILFIDRD…GIAHALADAP (168 aa). The active-site Nucleophile is the Asp-8. Positions 8, 10, and 128 each coordinate Mg(2+). The active-site Proton donor is the Asp-10. Residues 169-357 are imidazoleglycerol-phosphate dehydratase; the sequence is RIAVVQRDTK…TALPTTKGAL (189 aa).

This sequence in the N-terminal section; belongs to the histidinol-phosphatase family. In the C-terminal section; belongs to the imidazoleglycerol-phosphate dehydratase family. The cofactor is Mg(2+).

The protein resides in the cytoplasm. It carries out the reaction D-erythro-1-(imidazol-4-yl)glycerol 3-phosphate = 3-(imidazol-4-yl)-2-oxopropyl phosphate + H2O. It catalyses the reaction L-histidinol phosphate + H2O = L-histidinol + phosphate. It participates in amino-acid biosynthesis; L-histidine biosynthesis; L-histidine from 5-phospho-alpha-D-ribose 1-diphosphate: step 6/9. The protein operates within amino-acid biosynthesis; L-histidine biosynthesis; L-histidine from 5-phospho-alpha-D-ribose 1-diphosphate: step 8/9. In Stenotrophomonas maltophilia (strain R551-3), this protein is Histidine biosynthesis bifunctional protein HisB.